Reading from the N-terminus, the 353-residue chain is Probable dual-specificity RNA methyltransferase RlmN (353 aa).

The active-site Proton acceptor is the Glu104. The Radical SAM core domain maps to 112–341 (DGGRKTICIS…ILNRRSPGKD (230 aa)). Cys119 and Cys346 form a disulfide bridge. [4Fe-4S] cluster-binding residues include Cys126, Cys130, and Cys133. Residues 173 to 174 (GE), Ser205, 228 to 230 (SLN), and Asn304 each bind S-adenosyl-L-methionine. The S-methylcysteine intermediate role is filled by Cys346.

It belongs to the radical SAM superfamily. RlmN family. The cofactor is [4Fe-4S] cluster.

Its subcellular location is the cytoplasm. The enzyme catalyses adenosine(2503) in 23S rRNA + 2 reduced [2Fe-2S]-[ferredoxin] + 2 S-adenosyl-L-methionine = 2-methyladenosine(2503) in 23S rRNA + 5'-deoxyadenosine + L-methionine + 2 oxidized [2Fe-2S]-[ferredoxin] + S-adenosyl-L-homocysteine. It carries out the reaction adenosine(37) in tRNA + 2 reduced [2Fe-2S]-[ferredoxin] + 2 S-adenosyl-L-methionine = 2-methyladenosine(37) in tRNA + 5'-deoxyadenosine + L-methionine + 2 oxidized [2Fe-2S]-[ferredoxin] + S-adenosyl-L-homocysteine. Specifically methylates position 2 of adenine 2503 in 23S rRNA and position 2 of adenine 37 in tRNAs. This chain is Probable dual-specificity RNA methyltransferase RlmN, found in Leptospira interrogans serogroup Icterohaemorrhagiae serovar Lai (strain 56601).